Here is a 322-residue protein sequence, read N- to C-terminus: Probable F-box protein At1g60180 (322 aa).

The region spanning 45 to 88 (FCELSDECIAKILSGCPILESLTLSHCIYLTVLDLSKSLRLRTL) is the F-box domain.

In Arabidopsis thaliana (Mouse-ear cress), this protein is Probable F-box protein At1g60180.